The sequence spans 432 residues: Gamma-glutamyl phosphate reductase (432 aa).

The protein belongs to the gamma-glutamyl phosphate reductase family.

The protein localises to the cytoplasm. It catalyses the reaction L-glutamate 5-semialdehyde + phosphate + NADP(+) = L-glutamyl 5-phosphate + NADPH + H(+). Its pathway is amino-acid biosynthesis; L-proline biosynthesis; L-glutamate 5-semialdehyde from L-glutamate: step 2/2. In terms of biological role, catalyzes the NADPH-dependent reduction of L-glutamate 5-phosphate into L-glutamate 5-semialdehyde and phosphate. The product spontaneously undergoes cyclization to form 1-pyrroline-5-carboxylate. This chain is Gamma-glutamyl phosphate reductase, found in Methylorubrum extorquens (strain CM4 / NCIMB 13688) (Methylobacterium extorquens).